Here is a 583-residue protein sequence, read N- to C-terminus: MTGLLKRKFDQLEEDDSSSSSSSSFSSRLSLSSFPASSASPAWNSDEEGPGGQAPQSDQDSCGLQSFTPPSILKRAPRERPGHVAFNGITVYYFPRCQGFTSVPSRGGCTLGMASRHSTCRLFSLAEFTQEQVRARREKLRRRLKEEKLEMLRWKFSVAGVPESGAGVPLTADAIDDASVEEDLAVAVANGRLEEANFLQPHPPRQRRALLRASGVRRIDREEKRELQVLRQSREDCGCHCDGVCDPETCSCSLAGIKCQMDHTSFPCGCCREGCENPNGRVEFNQTRVQTHFIHTLTRLQMEQGAESLGDLESPVEDTPVEQAALSPFPPSKPPVSSELGDSSCSSDMTDSSTTLSSGSSEPPNHPAHPSLPGPSFRSGVDEDSLEQILNFSDSDLGIEEEEEEGGGVGNLDNLSCFHLADIFGTGDPGSLASWTHSQSGSSLASGILDENANLDASCFLNSGLGGLREGSLPGSSGSPEGDAVQSSSWDLSLSSCDSFELLQALPDYSLGPHYTSRRVSGSPDSLETFHPLPSFSPPRDASTCFLESLVGLSEPVTEVLAPLLESQFEDAALAPLLEPVPV.

Disordered stretches follow at residues 1-79 and 306-381; these read MTGL…APRE and AESL…RSGV. Residues 18–41 show a composition bias toward low complexity; sequence SSSSSSSFSSRLSLSSFPASSASP. Positions 54-69 are enriched in polar residues; the sequence is APQSDQDSCGLQSFTP. The segment covering 335–361 has biased composition (low complexity); that stretch reads PVSSELGDSSCSSDMTDSSTTLSSGSS. A compositionally biased stretch (pro residues) spans 364 to 373; the sequence is PNHPAHPSLP.

It belongs to the AXUD1 family. As to expression, widely expressed with highest levels in thymus and lung. Low levels detected in naive T-cells.

It localises to the nucleus. In terms of biological role, binds to the consensus sequence 5'-AGAGTG-3' and has transcriptional activator activity. May have a tumor-suppressor function. May play a role in apoptosis. This chain is Cysteine/serine-rich nuclear protein 1 (Csrnp1), found in Mus musculus (Mouse).